Consider the following 283-residue polypeptide: 5'-nucleotidase SurE (283 aa).

Aspartate 14, aspartate 15, serine 47, and asparagine 105 together coordinate a divalent metal cation.

The protein belongs to the SurE nucleotidase family. It depends on a divalent metal cation as a cofactor.

Its subcellular location is the cytoplasm. It catalyses the reaction a ribonucleoside 5'-phosphate + H2O = a ribonucleoside + phosphate. Its function is as follows. Nucleotidase that shows phosphatase activity on nucleoside 5'-monophosphates. The protein is 5'-nucleotidase SurE of Chlamydia muridarum (strain MoPn / Nigg).